The sequence spans 254 residues: MLAKPRPLDHIGDADDGVAAKAAGLDALYGHLKPLEIIERSARELFHDEIAAVSSFGADSAVLLHMIAEIDRTLPVIFLDTGKHFEETLGYRDALVADFGLTNIQVIKPEEAALARIDPTGNLHQSNTDACCDVRKVEPLARGVAPFRAWFTGRKRFQASTRAALPVFEAVGARIRINPLAHWTTSDQADYMRAHALRENPLVAYGYLSIGCFPCTQPVQPGEDARSGRWAGHAKTECGIHLSGLEVSLTDASL.

Residues C131, C132, C212, and C215 each contribute to the [4Fe-4S] cluster site. The Nucleophile; cysteine thiosulfonate intermediate role is filled by C238.

This sequence belongs to the PAPS reductase family. CysH subfamily. [4Fe-4S] cluster is required as a cofactor.

It is found in the cytoplasm. It carries out the reaction [thioredoxin]-disulfide + sulfite + AMP + 2 H(+) = adenosine 5'-phosphosulfate + [thioredoxin]-dithiol. Its pathway is sulfur metabolism; hydrogen sulfide biosynthesis; sulfite from sulfate. Functionally, catalyzes the formation of sulfite from adenosine 5'-phosphosulfate (APS) using thioredoxin as an electron donor. The sequence is that of Adenosine 5'-phosphosulfate reductase from Mesorhizobium japonicum (strain LMG 29417 / CECT 9101 / MAFF 303099) (Mesorhizobium loti (strain MAFF 303099)).